A 242-amino-acid polypeptide reads, in one-letter code: MLAVEVSEAEGGIREWEEEEKEEEAAERTPTGEKSPNSPRTLLSLRGKARTGGPMEVKLELHPLQNRWALWFFKNDRSRAWQDNLHLVTKVDTVEDFWALYSHIQLASKLSSGCDYALFKDGIQPMWEDSRNKRGGRWLVSLAKQQRHIELDRLWLETLLCLIGESFEEHSREVCGAVVNIRTKGDKIAVWTREAENQAGVLHVGRVYKERLGLSPKTIIGYQAHADTATKSNSLAKNKFVV.

The interval 1-42 (MLAVEVSEAEGGIREWEEEEKEEEAAERTPTGEKSPNSPRTL) is disordered. Acidic residues predominate over residues 16–25 (WEEEEKEEEA). Residues 32-41 (GEKSPNSPRT) are compositionally biased toward polar residues. The interval 62–65 (HPLQ) is EIF4EBP1/2/3 binding. Residue 81–82 (WQ) participates in mRNA binding. The EIF4EBP1/2/3 binding stretch occupies residues 98–102 (WALYS). 127 to 128 (WE) contacts mRNA. The tract at residues 157 to 164 (ETLLCLIG) is EIF4EBP1/2/3 binding. MRNA contacts are provided by residues 182-187 (RTKGDK) and 230-232 (TKS).

It belongs to the eukaryotic initiation factor 4E family. EIF4F is a multi-subunit complex, the composition of which varies with external and internal environmental conditions. It is composed of at least EIF4A, EIF4E and EIF4G.

Functionally, recognizes and binds the 7-methylguanosine-containing mRNA cap during an early step in the initiation of protein synthesis and facilitates ribosome binding by inducing the unwinding of the mRNAs secondary structure. In Homo sapiens (Human), this protein is Eukaryotic translation initiation factor 4E type 1B (EIF4E1B).